Reading from the N-terminus, the 454-residue chain is GTPase Der (454 aa).

EngA-type G domains follow at residues 3–167 (PVIT…GIAE) and 181–354 (MKIA…AAAM). GTP is bound by residues 9–16 (GRPNVGKS), 56–60 (DTGGF), 119–122 (NKTE), 187–194 (GRPNVGKS), 234–238 (DTAGL), and 299–302 (NKWD). The 85-residue stretch at 355 to 439 (AKLPTPRLTR…PLRIQMNTAK (85 aa)) folds into the KH-like domain.

This sequence belongs to the TRAFAC class TrmE-Era-EngA-EngB-Septin-like GTPase superfamily. EngA (Der) GTPase family. In terms of assembly, associates with the 50S ribosomal subunit.

In terms of biological role, GTPase that plays an essential role in the late steps of ribosome biogenesis. The protein is GTPase Der of Polynucleobacter asymbioticus (strain DSM 18221 / CIP 109841 / QLW-P1DMWA-1) (Polynucleobacter necessarius subsp. asymbioticus).